A 467-amino-acid polypeptide reads, in one-letter code: DEAD-box ATP-dependent RNA helicase CshA (467 aa).

Residues 2–30 (TTFQELGLSQEVMKAIERMGFEETTPIQA) carry the Q motif motif. In terms of domain architecture, Helicase ATP-binding spans 33 to 203 (IPLSLQNKDV…ERFMNEPELV (171 aa)). ATP is bound at residue 46 to 53 (AQTGTGKT). The DEAD box motif lies at 151 to 154 (DEAD). Residues 214-374 (NIQQYYLEVH…RMKPPTLDEA (161 aa)) enclose the Helicase C-terminal domain. The segment at 428–467 (TTPVQLTEEPPLAVKREKKRGGRPDGSARSRTKKRRITAH) is disordered. The span at 457-467 (SRTKKRRITAH) shows a compositional bias: basic residues.

This sequence belongs to the DEAD box helicase family. CshA subfamily. In terms of assembly, oligomerizes, may be a member of the RNA degradosome.

The protein localises to the cytoplasm. The catalysed reaction is ATP + H2O = ADP + phosphate + H(+). Its function is as follows. DEAD-box RNA helicase possibly involved in RNA degradation. Unwinds dsRNA in both 5'- and 3'-directions, has RNA-dependent ATPase activity. The protein is DEAD-box ATP-dependent RNA helicase CshA of Geobacillus kaustophilus (strain HTA426).